Consider the following 152-residue polypeptide: Transcriptional regulator MraZ (152 aa).

2 consecutive SpoVT-AbrB domains span residues 5-52 (ASAI…PIHE) and 81-124 (AHEV…DEQA).

It belongs to the MraZ family. Forms oligomers.

Its subcellular location is the cytoplasm. The protein localises to the nucleoid. The polypeptide is Transcriptional regulator MraZ (Shewanella oneidensis (strain ATCC 700550 / JCM 31522 / CIP 106686 / LMG 19005 / NCIMB 14063 / MR-1)).